The primary structure comprises 356 residues: S-adenosylmethionine:tRNA ribosyltransferase-isomerase (356 aa).

Belongs to the QueA family. As to quaternary structure, monomer.

It localises to the cytoplasm. It catalyses the reaction 7-aminomethyl-7-carbaguanosine(34) in tRNA + S-adenosyl-L-methionine = epoxyqueuosine(34) in tRNA + adenine + L-methionine + 2 H(+). Its pathway is tRNA modification; tRNA-queuosine biosynthesis. In terms of biological role, transfers and isomerizes the ribose moiety from AdoMet to the 7-aminomethyl group of 7-deazaguanine (preQ1-tRNA) to give epoxyqueuosine (oQ-tRNA). This chain is S-adenosylmethionine:tRNA ribosyltransferase-isomerase, found in Enterobacter sp. (strain 638).